Consider the following 459-residue polypeptide: Ribulose bisphosphate carboxylase large chain (459 aa).

Lys4 carries the N6,N6,N6-trimethyllysine modification. Substrate-binding residues include Asn113 and Thr163. Lys165 (proton acceptor) is an active-site residue. A substrate-binding site is contributed by Lys167. Residues Lys191, Asp193, and Glu194 each contribute to the Mg(2+) site. Lys191 bears the N6-carboxylysine mark. Residue His284 is the Proton acceptor of the active site. Residues Arg285, His317, and Ser369 each coordinate substrate.

The protein belongs to the RuBisCO large chain family. Type I subfamily. In terms of assembly, heterohexadecamer of 8 large chains and 8 small chains; disulfide-linked. The disulfide link is formed within the large subunit homodimers. Requires Mg(2+) as cofactor. The disulfide bond which can form in the large chain dimeric partners within the hexadecamer appears to be associated with oxidative stress and protein turnover.

It localises to the plastid. The protein localises to the chloroplast. It catalyses the reaction 2 (2R)-3-phosphoglycerate + 2 H(+) = D-ribulose 1,5-bisphosphate + CO2 + H2O. It carries out the reaction D-ribulose 1,5-bisphosphate + O2 = 2-phosphoglycolate + (2R)-3-phosphoglycerate + 2 H(+). RuBisCO catalyzes two reactions: the carboxylation of D-ribulose 1,5-bisphosphate, the primary event in carbon dioxide fixation, as well as the oxidative fragmentation of the pentose substrate in the photorespiration process. Both reactions occur simultaneously and in competition at the same active site. This chain is Ribulose bisphosphate carboxylase large chain, found in Morus alba (White mulberry).